A 230-amino-acid polypeptide reads, in one-letter code: MTTNAGPLHPYWPQHLRLDNFVPNDRPTWHILAGLFSVTGVLVVTTWLLSGRAAVVPLGTWRRLSLCWFAVCGFIHLVIEGWFVLYYEDLLGDQAFLSQLWKEYAKGDSRYILGDNFTVCMETITACLWGPLSLWVVIAFLRQHPLRFILQLVVSVGQIYGDVLYFLTEHRDGFQHGELGHPLYFWFYFVFMNALWLVLPGVLVLDAVKHLTHAQSTLDAKATKAKSKKN.

Threonine 2 bears the N-acetylthreonine mark. The next 4 membrane-spanning stretches (helical) occupy residues 29–49, 66–86, 121–141, and 185–205; these read WHILAGLFSVTGVLVVTTWLL, LCWFAVCGFIHLVIEGWFVLY, METITACLWGPLSLWVVIAFL, and FWFYFVFMNALWLVLPGVLVL. An EXPERA domain is found at 61–204; it reads WRRLSLCWFA…LWLVLPGVLV (144 aa).

This sequence belongs to the EBP family.

It is found in the endoplasmic reticulum membrane. The protein resides in the nucleus envelope. It localises to the cytoplasmic vesicle. It carries out the reaction lathosterol = 5alpha-cholest-8-en-3beta-ol. The enzyme catalyses zymosterol = 5alpha-cholesta-7,24-dien-3beta-ol. The catalysed reaction is 5,6alpha-epoxy-5alpha-cholestan-3beta-ol + H2O = 5alpha-cholestane-3beta,5,6beta-triol. It catalyses the reaction 5,6beta-epoxy-5beta-cholestan-3beta-ol + H2O = 5alpha-cholestane-3beta,5,6beta-triol. The protein operates within steroid biosynthesis; cholesterol biosynthesis. Cholestenol Delta-isomerase and cholesterol-5,6-epoxide hydrolase (ChEH) activities are inhibited by tamoxifen and the selective AEBS ligand (4-benzyl-phenoxy)-ethyl-N-pyrrolidine (PBPE). ChEH activity is inhibited by oleic acid. In terms of biological role, isomerase that catalyzes the conversion of Delta(8)-sterols to their corresponding Delta(7)-isomers a catalytic step in the postlanosterol biosynthesis of cholesterol. Its function is as follows. Component of the microsomal antiestrogen binding site (AEBS), a multiproteic complex at the ER membrane that consists of an association between EBP and 7-dehydrocholesterol reductase/DHCR7. This complex is responsible for cholesterol-5,6-epoxide hydrolase (ChEH) activity, which consists in the hydration of cholesterol-5,6-epoxides (5,6-EC) into cholestane-3beta,5alpha,6beta-triol (CT). The precise role of each component of this complex has not been described yet. The protein is 3-beta-hydroxysteroid-Delta(8),Delta(7)-isomerase of Homo sapiens (Human).